The chain runs to 211 residues: tRNA (guanine-N(7)-)-methyltransferase (211 aa).

S-adenosyl-L-methionine-binding residues include Glu43, Glu68, Asp95, and Asp117. Residue Asp117 is part of the active site. Substrate contacts are provided by residues Lys121, Asp153, and 190–193 (TEYE).

The protein belongs to the class I-like SAM-binding methyltransferase superfamily. TrmB family.

The catalysed reaction is guanosine(46) in tRNA + S-adenosyl-L-methionine = N(7)-methylguanosine(46) in tRNA + S-adenosyl-L-homocysteine. The protein operates within tRNA modification; N(7)-methylguanine-tRNA biosynthesis. Its function is as follows. Catalyzes the formation of N(7)-methylguanine at position 46 (m7G46) in tRNA. The protein is tRNA (guanine-N(7)-)-methyltransferase of Staphylococcus saprophyticus subsp. saprophyticus (strain ATCC 15305 / DSM 20229 / NCIMB 8711 / NCTC 7292 / S-41).